Consider the following 218-residue polypeptide: tRNA (guanine-N(7)-)-methyltransferase (218 aa).

Residues Glu43, Asp68, Glu101, and Asn124 each coordinate S-adenosyl-L-methionine. Lys128 and Asp160 together coordinate substrate.

It belongs to the class I-like SAM-binding methyltransferase superfamily. TrmB family.

It carries out the reaction guanosine(46) in tRNA + S-adenosyl-L-methionine = N(7)-methylguanosine(46) in tRNA + S-adenosyl-L-homocysteine. It participates in tRNA modification; N(7)-methylguanine-tRNA biosynthesis. In terms of biological role, catalyzes the formation of N(7)-methylguanine at position 46 (m7G46) in tRNA. The polypeptide is tRNA (guanine-N(7)-)-methyltransferase (Acetivibrio thermocellus (strain ATCC 27405 / DSM 1237 / JCM 9322 / NBRC 103400 / NCIMB 10682 / NRRL B-4536 / VPI 7372) (Clostridium thermocellum)).